We begin with the raw amino-acid sequence, 91 residues long: ATP synthase epsilon chain (91 aa).

Belongs to the ATPase epsilon chain family. As to quaternary structure, F-type ATPases have 2 components, CF(1) - the catalytic core - and CF(0) - the membrane proton channel. CF(1) has five subunits: alpha(3), beta(3), gamma(1), delta(1), epsilon(1). CF(0) has three main subunits: a, b and c.

It localises to the cell membrane. Functionally, produces ATP from ADP in the presence of a proton gradient across the membrane. The protein is ATP synthase epsilon chain (atpC) of Micrococcus luteus (strain ATCC 4698 / DSM 20030 / JCM 1464 / CCM 169 / CCUG 5858 / IAM 1056 / NBRC 3333 / NCIMB 9278 / NCTC 2665 / VKM Ac-2230) (Micrococcus lysodeikticus).